The sequence spans 242 residues: 7-cyano-7-deazaguanine synthase (242 aa).

Residues 1–25 (MNSRKDKNSKGKNSDTKRKKSSQEN) form a disordered region. ATP is bound at residue 32 to 42 (LSGGLDSTTCL). Zn(2+) is bound by residues cysteine 212, cysteine 221, cysteine 224, and cysteine 227.

This sequence belongs to the QueC family. It depends on Zn(2+) as a cofactor.

It catalyses the reaction 7-carboxy-7-deazaguanine + NH4(+) + ATP = 7-cyano-7-deazaguanine + ADP + phosphate + H2O + H(+). It functions in the pathway purine metabolism; 7-cyano-7-deazaguanine biosynthesis. Catalyzes the ATP-dependent conversion of 7-carboxy-7-deazaguanine (CDG) to 7-cyano-7-deazaguanine (preQ(0)). This is 7-cyano-7-deazaguanine synthase from Leptospira borgpetersenii serovar Hardjo-bovis (strain JB197).